We begin with the raw amino-acid sequence, 675 residues long: Gastrula zinc finger protein xFG20-1 (675 aa).

10 consecutive C2H2-type zinc fingers follow at residues 62-84 (FTCTECGKTFTRKPNYESHIRAH), 90-112 (FSCMVCDKAFAWKSNLLVHYSVH), 118-140 (FSCTECDKTFSNKAQLEKHLRVH), 146-168 (YSCEQCGKSFAHKCVLDSHQRTH), 174-196 (FSCTECGKKFSQRGNLHKHLKTH), 202-224 (HLCAECGKTFSFKSTLLEHQKIH), 257-279 (FPCTECGEIFSNEHELLTHQSTH), 286-308 (FPCTKCWGIFSNEHELRTHQSTH), 344-366 (LPCTECGGTFTNEQELLAHQSTH), and 373-395 (LPCTECGEIFSDEHELLTHQSTH). Residues 302-325 (RTHQSTHTEGQKSLPSTESGGTFS) are disordered. The segment covering 304 to 325 (HQSTHTEGQKSLPSTESGGTFS) has biased composition (polar residues). Over residues 390-407 (THQSTHTSPSTEFGVQTT) the composition is skewed to polar residues. Positions 390 to 423 (THQSTHTSPSTEFGVQTTEDNHQSPSKDHTGEKP) are disordered. Positions 408–421 (EDNHQSPSKDHTGE) are enriched in basic and acidic residues. C2H2-type zinc fingers lie at residues 424-446 (FSCSECGKSFFYKSVLKDHLVVH), 452-474 (YHCIECGRSYTHQSSLKSHQRTH), 480-501 (FSCNLCDKLSIISKLRLHYRVH), 507-529 (YPCTECDKTFTKKEQLESHYKVH), 535-557 (YPCQQCGKSFSHKSVLKLHLRTH), 563-585 (FSCTECGKTFTRKPNYESHLTTH), 591-613 (FSCTECGKEFAWKRNLEAHYKMH), and 619-642 (FTCTECGKTFTWKSNLRSHYTTVH).

The protein belongs to the krueppel C2H2-type zinc-finger protein family.

The protein localises to the nucleus. Functionally, may be involved in transcriptional regulation. The polypeptide is Gastrula zinc finger protein xFG20-1 (Xenopus laevis (African clawed frog)).